We begin with the raw amino-acid sequence, 360 residues long: Ubiquitin carboxyl-terminal hydrolase MIY1 (360 aa).

The active-site Nucleophile is C28. The active-site Proton acceptor is H216. The interval 317 to 360 (KRKIHSHKKNSEIHAPVKKDKFKRRSSLLNAKASEKEKSECVVM) is disordered. Composition is skewed to basic and acidic residues over residues 325–335 (KNSEIHAPVKK) and 349–360 (ASEKEKSECVVM).

The protein belongs to the MINDY deubiquitinase family. FAM63 subfamily.

The protein localises to the cytoplasm. It carries out the reaction Thiol-dependent hydrolysis of ester, thioester, amide, peptide and isopeptide bonds formed by the C-terminal Gly of ubiquitin (a 76-residue protein attached to proteins as an intracellular targeting signal).. Functionally, hydrolase that can specifically remove 'Lys-48'-linked conjugated ubiquitin from proteins. Has endodeubiquitinase activity. In Saccharomyces cerevisiae (strain ATCC 204508 / S288c) (Baker's yeast), this protein is Ubiquitin carboxyl-terminal hydrolase MIY1.